Reading from the N-terminus, the 1159-residue chain is RAD51-associated protein 2 (1159 aa).

The interval 1–35 (MSLPQPTPRMAELRKPTSSLTPPEDPDSQPPSSKR) is disordered. Residues 1111-1159 (SHFPHGISRVRPLKTCSRPIRIGLSRKARIKQLHPYLKQMCYGNLKENF) form an interaction with RAD51 region.

As to quaternary structure, interacts with RAD51. In terms of tissue distribution, specifically expressed in meiotic tissues. Highly expressed in testis.

This chain is RAD51-associated protein 2 (RAD51AP2), found in Homo sapiens (Human).